The following is a 400-amino-acid chain: Probable protein phosphatase 2C 64 (400 aa).

A PPM-type phosphatase domain is found at 47-355; it reads DFSMAVVQAN…DDITVIVVFF (309 aa). At serine 75 the chain carries Phosphoserine. The Mn(2+) site is built by aspartate 86, glycine 87, aspartate 287, and aspartate 346.

It belongs to the PP2C family. As to quaternary structure, interacts with SAUR19. Mg(2+) is required as a cofactor. The cofactor is Mn(2+).

The enzyme catalyses O-phospho-L-seryl-[protein] + H2O = L-seryl-[protein] + phosphate. It carries out the reaction O-phospho-L-threonyl-[protein] + H2O = L-threonyl-[protein] + phosphate. Dephosphorylates and represses plasma membrane H(+)-ATPases (PM H(+)-ATPases, e.g. AHA1 and AHA2), thus influencing negatively plant growth and fitness. The polypeptide is Probable protein phosphatase 2C 64 (Arabidopsis thaliana (Mouse-ear cress)).